Here is a 315-residue protein sequence, read N- to C-terminus: Tyrosine recombinase XerC (315 aa).

Residues 14 to 105 (PDLLNERQSW…GLRSLLHHLQ (92 aa)) form the Core-binding (CB) domain. Residues 126 to 309 (SLPKPLTDRQ…DTARLLEIYD (184 aa)) form the Tyr recombinase domain. Catalysis depends on residues arginine 169, lysine 193, histidine 261, arginine 264, and histidine 287. Residue tyrosine 296 is the O-(3'-phospho-DNA)-tyrosine intermediate of the active site.

The protein belongs to the 'phage' integrase family. XerC subfamily. In terms of assembly, forms a cyclic heterotetrameric complex composed of two molecules of XerC and two molecules of XerD.

Its subcellular location is the cytoplasm. Site-specific tyrosine recombinase, which acts by catalyzing the cutting and rejoining of the recombining DNA molecules. The XerC-XerD complex is essential to convert dimers of the bacterial chromosome into monomers to permit their segregation at cell division. It also contributes to the segregational stability of plasmids. The chain is Tyrosine recombinase XerC from Agrobacterium fabrum (strain C58 / ATCC 33970) (Agrobacterium tumefaciens (strain C58)).